Reading from the N-terminus, the 180-residue chain is MFPMLTGFISYGQQTIRAARYIGQGLIITLSHTNRLPITIHYPYEKSITSERFRGRIHFEFDKCIACEVCVRVCPIDLPLVDWKFEKDIKRKQLLNYSIDFGVCIFCGNCVEYCPTNCLSMTEEYELSTYDRHELNYNQIALSRLPISIMGDYTIQTIRNSPQSKIDEEKSWNSRTITDY.

2 4Fe-4S ferredoxin-type domains span residues 55 to 84 and 95 to 124; these read GRIHFEFDKCIACEVCVRVCPIDLPLVDWK and LNYSIDFGVCIFCGNCVEYCPTNCLSMTEE. Residues Cys64, Cys67, Cys70, Cys74, Cys104, Cys107, Cys110, and Cys114 each contribute to the [4Fe-4S] cluster site.

It belongs to the complex I 23 kDa subunit family. In terms of assembly, NDH is composed of at least 16 different subunits, 5 of which are encoded in the nucleus. The cofactor is [4Fe-4S] cluster.

It is found in the plastid. The protein localises to the chloroplast thylakoid membrane. The enzyme catalyses a plastoquinone + NADH + (n+1) H(+)(in) = a plastoquinol + NAD(+) + n H(+)(out). It catalyses the reaction a plastoquinone + NADPH + (n+1) H(+)(in) = a plastoquinol + NADP(+) + n H(+)(out). Functionally, NDH shuttles electrons from NAD(P)H:plastoquinone, via FMN and iron-sulfur (Fe-S) centers, to quinones in the photosynthetic chain and possibly in a chloroplast respiratory chain. The immediate electron acceptor for the enzyme in this species is believed to be plastoquinone. Couples the redox reaction to proton translocation, and thus conserves the redox energy in a proton gradient. The sequence is that of NAD(P)H-quinone oxidoreductase subunit I, chloroplastic from Sorghum bicolor (Sorghum).